Consider the following 181-residue polypeptide: Alkyl hydroperoxide reductase AhpD (181 aa).

Cys-130 functions as the Proton donor in the catalytic mechanism. The cysteines at positions 130 and 133 are disulfide-linked. Catalysis depends on Cys-133, which acts as the Cysteine sulfenic acid (-SOH) intermediate.

This sequence belongs to the AhpD family.

The enzyme catalyses N(6)-[(R)-dihydrolipoyl]-L-lysyl-[lipoyl-carrier protein] + a hydroperoxide = N(6)-[(R)-lipoyl]-L-lysyl-[lipoyl-carrier protein] + an alcohol + H2O. In terms of biological role, antioxidant protein with alkyl hydroperoxidase activity. Required for the reduction of the AhpC active site cysteine residues and for the regeneration of the AhpC enzyme activity. In Gluconacetobacter diazotrophicus (strain ATCC 49037 / DSM 5601 / CCUG 37298 / CIP 103539 / LMG 7603 / PAl5), this protein is Alkyl hydroperoxide reductase AhpD.